The primary structure comprises 388 residues: Acyl-[acyl-carrier-protein] dehydrogenase MbtN (388 aa).

It belongs to the acyl-CoA dehydrogenase family. Requires FAD as cofactor.

It participates in siderophore biosynthesis; mycobactin biosynthesis. In terms of biological role, catalyzes the dehydrogenation at the alpha-beta position of ACP-bound acyl chains. This results in the introduction of a double bond in the lipidic chain, which is further transferred to the epsilon-amino group of lysine residue in the mycobactin core by MbtK. This is Acyl-[acyl-carrier-protein] dehydrogenase MbtN (mbtN) from Mycolicibacterium paratuberculosis (strain ATCC BAA-968 / K-10) (Mycobacterium paratuberculosis).